The primary structure comprises 105 residues: uncharacterized protein (105 aa).

This sequence belongs to the M.jannaschii MJ0023/MJ0349/MJ1072/MJ1074/MJ1107/MJECL16 family.

This is an uncharacterized protein from Methanocaldococcus jannaschii (strain ATCC 43067 / DSM 2661 / JAL-1 / JCM 10045 / NBRC 100440) (Methanococcus jannaschii).